The chain runs to 203 residues: A-type ATP synthase subunit E (203 aa).

It belongs to the V-ATPase E subunit family. Has multiple subunits with at least A(3), B(3), C, D, E, F, H, I and proteolipid K(x).

It localises to the cell membrane. Component of the A-type ATP synthase that produces ATP from ADP in the presence of a proton gradient across the membrane. The chain is A-type ATP synthase subunit E from Thermococcus onnurineus (strain NA1).